The chain runs to 394 residues: MNSIIELTDYYSSNNYAPLKLVISKGKGVKVWDTDGKQYIDCISGFSVANQGHCHPTIVKAMTEQASKLSIISRVLYSDNLGKWEEKICHLAKKDKVLPLNSGTEAVEAAIKIARKWGSEVKGITDGQVEIIAMNNNFHGRTLGSLSLSNHDAYKAGFHPLLQGTTTVDFGDIEQLTQAISPNTAAIILEPIQGEGGVNIPPKGYIQAVRQLCDKHQILLIADEIQVGLGRTGKWFAMEWEQVVPDIYILGKALGGGLYPVSAVLANNDVMRVLTPGTHGSTFGGNPLAIAISTAALDVLKDEQLVERSERLGSFLLKALLQLKHPSIKEIRGRGLFIGIELNTDAAPFVDQLIQRGILCKDTHRTIIRLSPPLVIDKEEIHQIVAAFQDVFKN.

N6-(pyridoxal phosphate)lysine is present on Lys-252.

Belongs to the class-III pyridoxal-phosphate-dependent aminotransferase family. OAT subfamily. Pyridoxal 5'-phosphate serves as cofactor.

It localises to the cytoplasm. The enzyme catalyses a 2-oxocarboxylate + L-ornithine = L-glutamate 5-semialdehyde + an L-alpha-amino acid. Its pathway is amino-acid biosynthesis; L-proline biosynthesis; L-glutamate 5-semialdehyde from L-ornithine: step 1/1. Catalyzes the interconversion of ornithine to glutamate semialdehyde. The polypeptide is Ornithine aminotransferase 1 (Staphylococcus aureus (strain COL)).